A 731-amino-acid polypeptide reads, in one-letter code: Catalase-peroxidase (731 aa).

The tract at residues M1–N24 is disordered. A cross-link (tryptophyl-tyrosyl-methioninium (Trp-Tyr) (with M-245)) is located at residues W96–Y219. Residue H97 is the Proton acceptor of the active site. The segment at residues Y219–M245 is a cross-link (tryptophyl-tyrosyl-methioninium (Tyr-Met) (with W-96)). H260 is a heme b binding site. Residues G339–A365 are disordered.

This sequence belongs to the peroxidase family. Peroxidase/catalase subfamily. As to quaternary structure, homodimer or homotetramer. The cofactor is heme b. In terms of processing, formation of the three residue Trp-Tyr-Met cross-link is important for the catalase, but not the peroxidase activity of the enzyme.

The catalysed reaction is H2O2 + AH2 = A + 2 H2O. The enzyme catalyses 2 H2O2 = O2 + 2 H2O. Bifunctional enzyme with both catalase and broad-spectrum peroxidase activity. This Polaromonas sp. (strain JS666 / ATCC BAA-500) protein is Catalase-peroxidase.